The chain runs to 518 residues: Chromosomal replication initiator protein DnaA (518 aa).

A domain I, interacts with DnaA modulators region spans residues Met1–Pro72. The tract at residues Pro72 to Ser181 is domain II. Residues Ala155–Tyr178 form a disordered region. Residues Lys182 to Ser398 are domain III, AAA+ region. ATP is bound by residues Gly226, Gly228, Lys229, and Thr230. A domain IV, binds dsDNA region spans residues Lys399–Gly518.

Belongs to the DnaA family. In terms of assembly, oligomerizes as a right-handed, spiral filament on DNA at oriC.

It is found in the cytoplasm. Its function is as follows. Plays an essential role in the initiation and regulation of chromosomal replication. ATP-DnaA binds to the origin of replication (oriC) to initiate formation of the DNA replication initiation complex once per cell cycle. Binds the DnaA box (a 9 base pair repeat at the origin) and separates the double-stranded (ds)DNA. Forms a right-handed helical filament on oriC DNA; dsDNA binds to the exterior of the filament while single-stranded (ss)DNA is stabiized in the filament's interior. The ATP-DnaA-oriC complex binds and stabilizes one strand of the AT-rich DNA unwinding element (DUE), permitting loading of DNA polymerase. After initiation quickly degrades to an ADP-DnaA complex that is not apt for DNA replication. Binds acidic phospholipids. The sequence is that of Chromosomal replication initiator protein DnaA from Paraburkholderia phymatum (strain DSM 17167 / CIP 108236 / LMG 21445 / STM815) (Burkholderia phymatum).